The following is a 160-amino-acid chain: Ribosomal RNA large subunit methyltransferase H (160 aa).

S-adenosyl-L-methionine is bound by residues Leu77, Gly109, and 128 to 133 (FSRLTF).

The protein belongs to the RNA methyltransferase RlmH family. As to quaternary structure, homodimer.

Its subcellular location is the cytoplasm. It catalyses the reaction pseudouridine(1915) in 23S rRNA + S-adenosyl-L-methionine = N(3)-methylpseudouridine(1915) in 23S rRNA + S-adenosyl-L-homocysteine + H(+). In terms of biological role, specifically methylates the pseudouridine at position 1915 (m3Psi1915) in 23S rRNA. This chain is Ribosomal RNA large subunit methyltransferase H, found in Desulfitobacterium hafniense (strain Y51).